A 559-amino-acid chain; its full sequence is Alpha-(1,6)-fucosyltransferase (559 aa).

The Cytoplasmic segment spans residues Met-1–Cys-4. A helical; Signal-anchor for type II membrane protein membrane pass occupies residues Ile-5–Leu-24. Residues Ser-25 to Asp-559 lie on the Lumenal side of the membrane. Asn-27 is a glycosylation site (N-linked (GlcNAc...) asparagine). Over residues Gln-63 to Glu-74 the composition is skewed to basic and acidic residues. Residues Gln-63–Lys-90 form a disordered region. A compositionally biased stretch (pro residues) spans Pro-80–Lys-90. The N-linked (GlcNAc...) asparagine glycan is linked to Asn-134. Cystine bridges form between Cys-188/Cys-251, Cys-196/Cys-214, and Cys-202/Cys-206. A GT23 domain is found at Glu-190–Leu-480. The segment at Arg-351–Arg-352 is important for donor substrate binding. Cys-452 and Cys-459 are disulfide-bonded. Residues Gln-489 to Arg-550 enclose the SH3 domain.

Belongs to the glycosyltransferase 23 family. The cofactor is Mn(2+). Mg(2+) serves as cofactor.

The protein resides in the golgi apparatus. It is found in the golgi stack membrane. It catalyses the reaction N(4)-{beta-D-GlcNAc-(1-&gt;2)-alpha-D-Man-(1-&gt;3)-[beta-D-GlcNAc-(1-&gt;2)-alpha-D-Man-(1-&gt;6)]-beta-D-Man-(1-&gt;4)-beta-D-GlcNAc-(1-&gt;4)-beta-D-GlcNAc}-L-asparaginyl-[protein] + GDP-beta-L-fucose = an N(4)-{beta-D-GlcNAc-(1-&gt;2)-alpha-D-Man-(1-&gt;3)-[beta-D-GlcNAc-(1-&gt;2)-alpha-D-Man-(1-&gt;6)]-beta-D-Man-(1-&gt;4)-beta-D-GlcNAc-(1-&gt;4)-[alpha-L-Fuc-(1-&gt;6)]-beta-D-GlcNAc}-L-asparaginyl-[protein] + GDP + H(+). The protein operates within protein modification; protein glycosylation. With respect to regulation, inhibited by Fe(3+), Ni(2+) and Cu(2+). Functionally, catalyzes the addition of fucose in alpha 1-6 linkage to the first GlcNAc residue, next to the peptide chains in N-glycans. The addition is prevented if the GlcNAc residue is already fucosylated. Involved in susceptibility to the nematotoxic C.cinerea galectin Cgl2, likely by contributing to the synthesis of core alpha-1,6-fucosylated N-glycans to which Cgl2 binds. The polypeptide is Alpha-(1,6)-fucosyltransferase (Caenorhabditis elegans).